We begin with the raw amino-acid sequence, 83 residues long: Large ribosomal subunit protein bL27 (83 aa).

Residues 1–22 (MAHKKGQGSTRNGRDSHSKRLG) are disordered.

This sequence belongs to the bacterial ribosomal protein bL27 family.

The polypeptide is Large ribosomal subunit protein bL27 (Protochlamydia amoebophila (strain UWE25)).